The sequence spans 1392 residues: ATP-dependent helicase/nuclease subunit A (1392 aa).

Positions 4–595 (FKPTPAQSKA…IVLGENFRSM (592 aa)) constitute a UvrD-like helicase ATP-binding domain. 25–32 (ASAGSGKT) serves as a coordination point for ATP. Residues 623-929 (AHLKYAATYY…NVMTIHGSKG (307 aa)) enclose the UvrD-like helicase C-terminal domain.

The protein belongs to the helicase family. AddA subfamily. As to quaternary structure, heterodimer of AddA and AddB/RexB. Mg(2+) serves as cofactor.

The catalysed reaction is Couples ATP hydrolysis with the unwinding of duplex DNA by translocating in the 3'-5' direction.. It catalyses the reaction ATP + H2O = ADP + phosphate + H(+). Functionally, the heterodimer acts as both an ATP-dependent DNA helicase and an ATP-dependent, dual-direction single-stranded exonuclease. Recognizes the chi site generating a DNA molecule suitable for the initiation of homologous recombination. The AddA nuclease domain is required for chi fragment generation; this subunit has the helicase and 3' -&gt; 5' nuclease activities. This is ATP-dependent helicase/nuclease subunit A from Limosilactobacillus reuteri subsp. reuteri (strain JCM 1112) (Lactobacillus reuteri).